Here is a 425-residue protein sequence, read N- to C-terminus: Serine--tRNA ligase (425 aa).

232 to 234 contributes to the L-serine binding site; it reads TSE. ATP-binding positions include 263–265 and Val-279; that span reads RRE. Glu-286 serves as a coordination point for L-serine. 350 to 353 lines the ATP pocket; that stretch reads EVVS. An L-serine-binding site is contributed by Thr-387.

The protein belongs to the class-II aminoacyl-tRNA synthetase family. Type-1 seryl-tRNA synthetase subfamily. In terms of assembly, homodimer. The tRNA molecule binds across the dimer.

The protein resides in the cytoplasm. It carries out the reaction tRNA(Ser) + L-serine + ATP = L-seryl-tRNA(Ser) + AMP + diphosphate + H(+). The catalysed reaction is tRNA(Sec) + L-serine + ATP = L-seryl-tRNA(Sec) + AMP + diphosphate + H(+). It participates in aminoacyl-tRNA biosynthesis; selenocysteinyl-tRNA(Sec) biosynthesis; L-seryl-tRNA(Sec) from L-serine and tRNA(Sec): step 1/1. Its function is as follows. Catalyzes the attachment of serine to tRNA(Ser). Is also able to aminoacylate tRNA(Sec) with serine, to form the misacylated tRNA L-seryl-tRNA(Sec), which will be further converted into selenocysteinyl-tRNA(Sec). This Methanospirillum hungatei JF-1 (strain ATCC 27890 / DSM 864 / NBRC 100397 / JF-1) protein is Serine--tRNA ligase.